The chain runs to 693 residues: Lamina-associated polypeptide 2, isoforms alpha/zeta (693 aa).

The 44-residue stretch at 5–48 (LEDPSVLTKDKLKSELVANNVTLPAGEQRKDVYVQLYLQHLTAR) folds into the LEM-like domain. 3 disordered regions span residues 48 to 113 (RNRP…DVTE), 148 to 211 (LREQ…LAST), and 227 to 270 (TRPP…KLAP). Residues 49-107 (NRPPLAAGANSKGPPDFSSDEEREPTPVLGSGASVGRGRGAVGRKATKKTDKPRLEDKD) form a linker region. Residues Ser59, Ser66, and Ser67 each carry the phosphoserine modification. Position 74 is a phosphothreonine (Thr74). Residues Ser79 and Ser82 each carry the phosphoserine modification. 2 positions are modified to omega-N-methylarginine: Arg85 and Arg87. Residues 96-105 (KKTDKPRLED) are compositionally biased toward basic and acidic residues. The LEM domain occupies 108–152 (DLDVTELSNEELLDQLVRYGVNPGPIVGTTRKLYEKKLLKLREQG). Thr153 is modified (phosphothreonine). Residues 154 to 177 (ESRSSTPLPTVSSSAENTRQNGSN) show a composition bias toward polar residues. Residues Ser155 and Ser158 each carry the phosphoserine modification. 2 positions are modified to phosphothreonine: Thr159 and Thr163. Phosphoserine is present on residues Ser165 and Ser167. Residues 178-190 (DSDRYSDNDEGKK) are compositionally biased toward basic and acidic residues. The short motif at 190–196 (KKEHKKV) is the Nuclear localization signal element. N6-acetyllysine is present on Ser206. Positions 245 to 254 (TKRDPPRETC) are enriched in basic and acidic residues. Position 310 is a phosphoserine (Ser310). Arg329 bears the Omega-N-methylarginine mark. Residues 332–351 (KSRAQPLRAEEPGVSDQSVF) are disordered. A phosphoserine mark is found at Ser349, Ser352, Ser368, Ser420, and Ser422. Residues 412–422 (QSSYQDSESLS) show a composition bias toward low complexity. Positions 412 to 442 (QSSYQDSESLSPPRKVPRLSEKPARGGDSGS) are disordered. The stretch at 557 to 656 (TESCDKHLDL…MGRRYLWLKD (100 aa)) forms a coiled coil. Lys655 is subject to N6-acetyllysine.

This sequence belongs to the LEM family. As to quaternary structure, homooligomer. Interacts with LMNA, BANF1 and RB1 and with chromosomes. Associates directly or indirectly with lamins at specific cell-cycle stages. Interacts with CMTM6. Phosphorylated in a mitose-specific manner.

The protein localises to the nucleus. It is found in the chromosome. In terms of biological role, may be involved in the structural organization of the nucleus and in the post-mitotic nuclear assembly. Plays an important role, together with LMNA, in the nuclear anchorage of RB1. This is Lamina-associated polypeptide 2, isoforms alpha/zeta (Tmpo) from Mus musculus (Mouse).